Consider the following 301-residue polypeptide: Acetylglutamate kinase (301 aa).

Substrate is bound by residues 72 to 73 (GG), Arg-94, and Asn-199.

The protein belongs to the acetylglutamate kinase family. ArgB subfamily.

It localises to the cytoplasm. The enzyme catalyses N-acetyl-L-glutamate + ATP = N-acetyl-L-glutamyl 5-phosphate + ADP. It participates in amino-acid biosynthesis; L-arginine biosynthesis; N(2)-acetyl-L-ornithine from L-glutamate: step 2/4. In terms of biological role, catalyzes the ATP-dependent phosphorylation of N-acetyl-L-glutamate. The protein is Acetylglutamate kinase of Bartonella henselae (strain ATCC 49882 / DSM 28221 / CCUG 30454 / Houston 1) (Rochalimaea henselae).